Reading from the N-terminus, the 483-residue chain is MAYIEGNTGKWEYVIGLEIHAQISSKSKLFSGSSTIFAANPNSQVSYVDAAMPGMLPVLNKHCVHQAIKTGLGLKAKINKYSVFDRKNYFYADLPQGYQISQFYYPIVQNGTMEIPTSTGDLKTIRINRLHLEQDAGKSMHDQSPHYSFIDLNRAGIGLMEIVTEPDISSPEEAAEFVKKLRNLLRYIGSCDGDMEKGSMRCDANISVRRSGEPLGTRCEIKNINSIRNIIKAIEFEAKRQVDLLESGEKIIQETRLFNADSGETRTMRLKEEALDYRYFPDPDLLPLVISDELINELKANLPELPDQKIEKYTKEFSLSKYDAEVIVADESVAEYFEKAANECNPKMLTNWLTSELFGQLNKASIGINECKITPSNFAKLVKLIENDTISGKIAKTVFEIMFETGKAPDKIVEEKGLVQVSDNNVLNTVIDEVIAENPESVEGYRSGKDKLFGFFVGQVMKKTGGKANPTLVNQLLKEKLSS.

Belongs to the GatB/GatE family. GatB subfamily. Heterotrimer of A, B and C subunits.

It carries out the reaction L-glutamyl-tRNA(Gln) + L-glutamine + ATP + H2O = L-glutaminyl-tRNA(Gln) + L-glutamate + ADP + phosphate + H(+). The enzyme catalyses L-aspartyl-tRNA(Asn) + L-glutamine + ATP + H2O = L-asparaginyl-tRNA(Asn) + L-glutamate + ADP + phosphate + 2 H(+). Allows the formation of correctly charged Asn-tRNA(Asn) or Gln-tRNA(Gln) through the transamidation of misacylated Asp-tRNA(Asn) or Glu-tRNA(Gln) in organisms which lack either or both of asparaginyl-tRNA or glutaminyl-tRNA synthetases. The reaction takes place in the presence of glutamine and ATP through an activated phospho-Asp-tRNA(Asn) or phospho-Glu-tRNA(Gln). The sequence is that of Aspartyl/glutamyl-tRNA(Asn/Gln) amidotransferase subunit B from Rickettsia conorii (strain ATCC VR-613 / Malish 7).